The chain runs to 664 residues: Macoilin (664 aa).

A run of 4 helical transmembrane segments spans residues 28-48 (TFLYLKFLVVWALVLLADFVL), 75-95 (AFSVFFVCVAFTSNIICLLFI), 120-140 (VCLPTVSLWILFVYIEAAIRF), and 154-174 (FAAHCIGYPVVTLGFGFKSYV). Residues 253-265 (REKGKEKDKDAKK) are compositionally biased toward basic and acidic residues. The disordered stretch occupies residues 253–274 (REKGKEKDKDAKKHNLGINNNN). Ser305 bears the Phosphoserine mark. Positions 320–348 (KNYKNASGVVNSSPRSHSATNGSIPSSSS) are enriched in polar residues. The interval 320–375 (KNYKNASGVVNSSPRSHSATNGSIPSSSSKNEKKQKCTSKSPSTHKDLMENCIPNN) is disordered. Residue Asn324 is glycosylated (N-linked (GlcNAc...) asparagine). Position 332 is a phosphoserine (Ser332). N-linked (GlcNAc...) asparagine glycans are attached at residues Asn340 and Asn452. The segment at 630-664 (TSPLSPVSPHYSSKFVETSPSGLDPNASVYQPLKK) is disordered. Residues Ser631 and Ser634 each carry the phosphoserine modification. Asn655 carries N-linked (GlcNAc...) asparagine glycosylation.

The protein belongs to the macoilin family.

It is found in the rough endoplasmic reticulum membrane. The protein resides in the nucleus membrane. Functionally, plays a role in the regulation of neuronal activity. In Canis lupus familiaris (Dog), this protein is Macoilin (MACO1).